We begin with the raw amino-acid sequence, 224 residues long: Ribose-5-phosphate isomerase A (224 aa).

Substrate-binding positions include 32 to 35 (TGST), 85 to 88 (DGAD), and 98 to 101 (KGGG). E107 functions as the Proton acceptor in the catalytic mechanism. K125 is a substrate binding site.

This sequence belongs to the ribose 5-phosphate isomerase family. In terms of assembly, homodimer.

The enzyme catalyses aldehydo-D-ribose 5-phosphate = D-ribulose 5-phosphate. The protein operates within carbohydrate degradation; pentose phosphate pathway; D-ribose 5-phosphate from D-ribulose 5-phosphate (non-oxidative stage): step 1/1. Its function is as follows. Catalyzes the reversible conversion of ribose-5-phosphate to ribulose 5-phosphate. The polypeptide is Ribose-5-phosphate isomerase A (Pseudomonas entomophila (strain L48)).